The following is a 123-amino-acid chain: uncharacterized protein (123 aa).

The disordered stretch occupies residues 17-74; it reads FQKKKKTGSQTRRTLKPQPQQLQQNLPKGHETTGHTYERVLQQQGSQERSPGLMSEDS. At threonine 30 the chain carries Phosphothreonine. Residues 32-43 are compositionally biased toward low complexity; that stretch reads KPQPQQLQQNLP. Residues 44-54 are compositionally biased toward basic and acidic residues; that stretch reads KGHETTGHTYE. Serine 62 is modified (phosphoserine).

This is an uncharacterized protein from Homo sapiens (Human).